Consider the following 161-residue polypeptide: Nucleotide-binding protein Rpic_2826 (161 aa).

The protein belongs to the YajQ family.

Nucleotide-binding protein. This Ralstonia pickettii (strain 12J) protein is Nucleotide-binding protein Rpic_2826.